The sequence spans 125 residues: Large ribosomal subunit protein eL22 (125 aa).

Belongs to the eukaryotic ribosomal protein eL22 family. As to quaternary structure, component of the large ribosomal subunit.

Its subcellular location is the cytoplasm. Component of the large ribosomal subunit. The ribosome is a large ribonucleoprotein complex responsible for the synthesis of proteins in the cell. The chain is Large ribosomal subunit protein eL22 (rpl22) from Gadus morhua (Atlantic cod).